A 146-amino-acid chain; its full sequence is Large ribosomal subunit protein uL15 (146 aa).

Residues 1–45 (MTIKLHHLRPAPGSKTERTRVGRGEGSKGKTAGRGTKGTKARKNV) are disordered. Positions 15–28 (KTERTRVGRGEGSK) are enriched in basic and acidic residues.

It belongs to the universal ribosomal protein uL15 family. In terms of assembly, part of the 50S ribosomal subunit.

Functionally, binds to the 23S rRNA. The sequence is that of Large ribosomal subunit protein uL15 from Mycobacteroides abscessus (strain ATCC 19977 / DSM 44196 / CCUG 20993 / CIP 104536 / JCM 13569 / NCTC 13031 / TMC 1543 / L948) (Mycobacterium abscessus).